We begin with the raw amino-acid sequence, 369 residues long: MSDFLALAQPGVQKLSPYVPGKPVDELARELGIDPAAIVKLASNENPLGASPKALEAIRAELAELTRYPDGNGFELKRKLAERCAVDAAQVTLGNGSNDILDLVARAYLAPGLNAVFSEHAFAVYPIATQAVGAEGRAVKARAWGHDLEAMLAAIDGQTRVVFVANPNNPTGTWFGADALERFLAQVPAEVLVVLDEAYIEYAEGDELPDGLDYLARHPNLLVSRTFSKAYGLASLRVGYALSSKAVADVLNRVRQPFNVNSLALAAACAALDDHDYLAQSRRLNDSGMAQLEDGFHALGLSWIPSKGNFIAVDLARDAGPVYQALLREGVIVRPVAGYGMPTFLRVSIGLPEENDRFLQALGKVLAHD.

At lysine 229 the chain carries N6-(pyridoxal phosphate)lysine.

The protein belongs to the class-II pyridoxal-phosphate-dependent aminotransferase family. Histidinol-phosphate aminotransferase subfamily. As to quaternary structure, homodimer. Requires pyridoxal 5'-phosphate as cofactor.

The enzyme catalyses L-histidinol phosphate + 2-oxoglutarate = 3-(imidazol-4-yl)-2-oxopropyl phosphate + L-glutamate. Its pathway is amino-acid biosynthesis; L-histidine biosynthesis; L-histidine from 5-phospho-alpha-D-ribose 1-diphosphate: step 7/9. This chain is Histidinol-phosphate aminotransferase 2 (hisC2), found in Pseudomonas aeruginosa (strain ATCC 15692 / DSM 22644 / CIP 104116 / JCM 14847 / LMG 12228 / 1C / PRS 101 / PAO1).